We begin with the raw amino-acid sequence, 180 residues long: NADH-quinone oxidoreductase subunit I (180 aa).

4Fe-4S ferredoxin-type domains lie at 50 to 80 and 90 to 119; these read LTRDPDGEERCVACNLCAVACPVGCISLQKA and EFFRINFSRCIFCGMCEEACPTTAIQMTPD. The [4Fe-4S] cluster site is built by Cys60, Cys63, Cys66, Cys70, Cys99, Cys102, Cys105, and Cys109.

This sequence belongs to the complex I 23 kDa subunit family. NDH-1 is composed of 14 different subunits. Subunits NuoA, H, J, K, L, M, N constitute the membrane sector of the complex. [4Fe-4S] cluster is required as a cofactor.

It is found in the cell inner membrane. It catalyses the reaction a quinone + NADH + 5 H(+)(in) = a quinol + NAD(+) + 4 H(+)(out). Functionally, NDH-1 shuttles electrons from NADH, via FMN and iron-sulfur (Fe-S) centers, to quinones in the respiratory chain. The immediate electron acceptor for the enzyme in this species is believed to be ubiquinone. Couples the redox reaction to proton translocation (for every two electrons transferred, four hydrogen ions are translocated across the cytoplasmic membrane), and thus conserves the redox energy in a proton gradient. This is NADH-quinone oxidoreductase subunit I from Acinetobacter baylyi (strain ATCC 33305 / BD413 / ADP1).